The primary structure comprises 113 residues: Cytochrome c55X (113 aa).

Residues 1–26 form the signal peptide; that stretch reads MTVARHAVSRLGLALASFLLFPLALA. Residues C45, C48, and H49 each coordinate heme c.

Binds 1 heme c group covalently per subunit.

It localises to the periplasm. Its function is as follows. Monoheme c-type cytochrome. The polypeptide is Cytochrome c55X (nirC) (Stutzerimonas stutzeri (Pseudomonas stutzeri)).